A 642-amino-acid chain; its full sequence is Threonine--tRNA ligase (642 aa).

A TGS domain is found at 1–61; that stretch reads MPIITLPDGS…STDSDLSIIT (61 aa). A catalytic region spans residues 243 to 534; sequence DHRKIGKQLD…LIEEYAGKFP (292 aa). The Zn(2+) site is built by Cys334, His385, and His511.

It belongs to the class-II aminoacyl-tRNA synthetase family. Homodimer. Zn(2+) is required as a cofactor.

Its subcellular location is the cytoplasm. The enzyme catalyses tRNA(Thr) + L-threonine + ATP = L-threonyl-tRNA(Thr) + AMP + diphosphate + H(+). Its function is as follows. Catalyzes the attachment of threonine to tRNA(Thr) in a two-step reaction: L-threonine is first activated by ATP to form Thr-AMP and then transferred to the acceptor end of tRNA(Thr). Also edits incorrectly charged L-seryl-tRNA(Thr). This is Threonine--tRNA ligase from Shewanella denitrificans (strain OS217 / ATCC BAA-1090 / DSM 15013).